The following is a 239-amino-acid chain: Ureidoacrylate amidohydrolase RutB (239 aa).

The Proton acceptor role is filled by aspartate 35. Lysine 144 is an active-site residue. The Nucleophile role is filled by cysteine 177.

This sequence belongs to the isochorismatase family. RutB subfamily.

It carries out the reaction (Z)-3-ureidoacrylate + H2O + H(+) = (Z)-3-aminoacrylate + NH4(+) + CO2. The enzyme catalyses (Z)-3-ureidoacrylate + H2O = (Z)-3-aminoacrylate + carbamate + H(+). It catalyses the reaction (Z)-2-methylureidoacrylate + H2O + H(+) = (Z)-2-methylaminoacrylate + NH4(+) + CO2. In terms of biological role, hydrolyzes ureidoacrylate to form aminoacrylate and carbamate. The carbamate hydrolyzes spontaneously, thereby releasing one of the nitrogen atoms of the pyrimidine ring as ammonia and one of its carbon atoms as CO2. The sequence is that of Ureidoacrylate amidohydrolase RutB from Caulobacter segnis (strain ATCC 21756 / DSM 7131 / JCM 7823 / NBRC 15250 / LMG 17158 / TK0059) (Mycoplana segnis).